The sequence spans 333 residues: Taste receptor type 2 member 38 (333 aa).

At 1-17 (MLTLTRICTVSYEVRST) the chain is on the extracellular side. A helical transmembrane segment spans residues 18 to 38 (FLFISVLEFAVGFLTNAFIFL). Residues 39-55 (VNFWDVVKRQPLSNSDC) lie on the Cytoplasmic side of the membrane. A helical transmembrane segment spans residues 56–76 (VLLCLSISRLFLHGLLFLSAI). Residues 77–94 (QLTHFQKLSEPLNHSYHA) are Extracellular-facing. The chain crosses the membrane as a helical span at residues 95 to 115 (IIMLWMIANQANLWLATCLSL). The Cytoplasmic portion of the chain corresponds to 116-142 (LYCSKLIRSSHTFLICLASWVSRKICQ). Residues 143-163 (MLLGIILCSCICTVLCVWCYF) traverse the membrane as a helical segment. Residues 164–190 (SRPHFTVTTVLFTNNNTRLNWQIKDLN) are Extracellular-facing. Asparagine 178 carries N-linked (GlcNAc...) asparagine glycosylation. A helical membrane pass occupies residues 191–211 (LFYSFLFCYLWSVPPFLLFLV). Over 212 to 251 (SSGMLTVSLGRHMRTMKVYTRDFRDPSLEAHIKALKSLVS) the chain is Cytoplasmic. The chain crosses the membrane as a helical span at residues 252-272 (FFCFFVISSCAAFISVPLLIL). The Extracellular portion of the chain corresponds to 273-276 (WRDK). Residues 277-297 (IGVMVCVGIMAACPSGHAAIL) form a helical membrane-spanning segment. The Cytoplasmic portion of the chain corresponds to 298–333 (ISGNAKLRRAVTTILLWAQSSLKVRADHKADSRTLC).

Belongs to the G-protein coupled receptor T2R family.

The protein resides in the membrane. Its function is as follows. Receptor that may play a role in the perception of bitterness and is gustducin-linked. May play a role in sensing the chemical composition of the gastrointestinal content. The activity of this receptor may stimulate alpha gustducin, mediate PLC-beta-2 activation and lead to the gating of TRPM5. The polypeptide is Taste receptor type 2 member 38 (TAS2R38) (Hylobates klossii (Kloss's gibbon)).